The primary structure comprises 149 residues: Leghemoglobin (149 aa).

Residues 3–147 (AFSEKQESLV…LAAAIKKAMG (145 aa)) form the Globin domain. At Tyr31 the chain carries Nitrated tyrosine. Heme b is bound at residue Ser46. Ser46 bears the Phosphoserine mark. Residue His62 participates in O2 binding. The heme b site is built by Lys65, His94, and Lys97. Tyr135 is modified (nitrated tyrosine).

This sequence belongs to the plant globin family. As to quaternary structure, monomer. Post-translationally, nitrated in effective nodules and particularly in hypoxic conditions; this mechanism may play a protective role in the symbiosis by buffering toxic peroxynitrite NO(2)(-). Nitration level decrease during nodule senescence. In terms of processing, phosphorylation at Ser-46 disrupts the molecular environment of its porphyrin ring oxygen binding pocket, thus leading to a reduced oxygen consumption and to the delivery of oxygen O(2) to symbiosomes. Root nodules.

Its subcellular location is the cytoplasm. It localises to the cytosol. The protein resides in the nucleus. Functionally, leghemoglobin that reversibly binds oxygen O(2) through a pentacoordinated heme iron. In root nodules, facilitates the diffusion of oxygen to the bacteroids while preventing the bacterial nitrogenase from being inactivated by buffering dioxygen, nitric oxide and carbon monoxide, and promoting the formation of reactive oxygen species (ROS, e.g. H(2)O(2)). This role is essential for symbiotic nitrogen fixation (SNF). This Canavalia lineata (Beach bean) protein is Leghemoglobin.